Reading from the N-terminus, the 101-residue chain is Feather keratin Cos2-3 (101 aa).

Ser-2 is modified (N-acetylserine).

The protein belongs to the avian keratin family. As to quaternary structure, the avian keratins (F-ker, S-ker, C-ker and B-ker) are a complex mixture of very similar polypeptides.

In Columba livia (Rock dove), this protein is Feather keratin Cos2-3.